The sequence spans 373 residues: MTTVKTNLLDLDRKGLRTYFAEELNEKAFRADQIMKWIYQFGCDDFDQMTNINKKLREKLKRVAEIRAPYVSQAQHSVDGTIKWAMRVGDQDVETVYIPDGDRATLCVSSQVGCALACTFCSTAQQGFNRNLRVSEIIGQVWRAAKEIGIEKDTGRRPITNVVMMGMGEPLLNMKNLIPALEIMLDDIGFGLSKRRVTVSTSGVVSGLDQMTGNIDVALAISLHAPTDELRSQIMPINDRFNIATFLESVSRYIEQSNANRGRVTVEYILLDHVNDDMEHARQLAVLLKDTPAKINLIPFNPYPGSPYRKPSNSRIDRFMKTLMEYDFTVTVRKTRGDDIDAACGQLVGDVIDRTKRTQVKQHDGEQIPVKTV.

The Proton acceptor role is filled by Glu94. The 240-residue stretch at 100–339 folds into the Radical SAM core domain; it reads DGDRATLCVS…VTVRKTRGDD (240 aa). A disulfide bridge links Cys107 with Cys344. [4Fe-4S] cluster-binding residues include Cys114, Cys118, and Cys121. S-adenosyl-L-methionine contacts are provided by residues 168 to 169, Ser200, 222 to 224, and Asn301; these read GE and SLH. The active-site S-methylcysteine intermediate is Cys344.

It belongs to the radical SAM superfamily. RlmN family. [4Fe-4S] cluster is required as a cofactor.

It is found in the cytoplasm. It carries out the reaction adenosine(2503) in 23S rRNA + 2 reduced [2Fe-2S]-[ferredoxin] + 2 S-adenosyl-L-methionine = 2-methyladenosine(2503) in 23S rRNA + 5'-deoxyadenosine + L-methionine + 2 oxidized [2Fe-2S]-[ferredoxin] + S-adenosyl-L-homocysteine. The enzyme catalyses adenosine(37) in tRNA + 2 reduced [2Fe-2S]-[ferredoxin] + 2 S-adenosyl-L-methionine = 2-methyladenosine(37) in tRNA + 5'-deoxyadenosine + L-methionine + 2 oxidized [2Fe-2S]-[ferredoxin] + S-adenosyl-L-homocysteine. Specifically methylates position 2 of adenine 2503 in 23S rRNA and position 2 of adenine 37 in tRNAs. m2A2503 modification seems to play a crucial role in the proofreading step occurring at the peptidyl transferase center and thus would serve to optimize ribosomal fidelity. The sequence is that of Dual-specificity RNA methyltransferase RlmN from Photobacterium profundum (strain SS9).